The sequence spans 343 residues: Major outer membrane protein (343 aa).

An N-terminal signal peptide occupies residues 1-20; sequence MKKTIVALAVAAVAATSANA.

Disulfide bond interactions within and between MOMP molecules and other components form high molecular-weight oligomers.

The protein resides in the cell outer membrane. Functionally, structural rigidity of the outer membrane of elementary bodies and porin forming, permitting diffusion of solutes through the intracellular reticulate body membrane. In Pasteurella multocida, this protein is Major outer membrane protein (ompH).